A 235-amino-acid polypeptide reads, in one-letter code: 2-C-methyl-D-erythritol 4-phosphate cytidylyltransferase (235 aa).

Belongs to the IspD/TarI cytidylyltransferase family. IspD subfamily.

The catalysed reaction is 2-C-methyl-D-erythritol 4-phosphate + CTP + H(+) = 4-CDP-2-C-methyl-D-erythritol + diphosphate. Its pathway is isoprenoid biosynthesis; isopentenyl diphosphate biosynthesis via DXP pathway; isopentenyl diphosphate from 1-deoxy-D-xylulose 5-phosphate: step 2/6. Catalyzes the formation of 4-diphosphocytidyl-2-C-methyl-D-erythritol from CTP and 2-C-methyl-D-erythritol 4-phosphate (MEP). This is 2-C-methyl-D-erythritol 4-phosphate cytidylyltransferase from Ectopseudomonas mendocina (strain ymp) (Pseudomonas mendocina).